The following is a 131-amino-acid chain: Small ribosomal subunit protein uS11 (131 aa).

Residues 1–15 are compositionally biased toward basic residues; that stretch reads MAAQKVKKTRRRKER. The tract at residues 1–23 is disordered; that stretch reads MAAQKVKKTRRRKERKNVEHGAA.

It belongs to the universal ribosomal protein uS11 family. Part of the 30S ribosomal subunit. Interacts with proteins S7 and S18. Binds to IF-3.

Functionally, located on the platform of the 30S subunit, it bridges several disparate RNA helices of the 16S rRNA. Forms part of the Shine-Dalgarno cleft in the 70S ribosome. The polypeptide is Small ribosomal subunit protein uS11 (Clostridium perfringens (strain 13 / Type A)).